The primary structure comprises 125 residues: Late histone H2A.1 (125 aa).

Over residues 1–18 the composition is skewed to basic residues; the sequence is MSGRGKGKAKGTKSKTRS. The disordered stretch occupies residues 1–21; it reads MSGRGKGKAKGTKSKTRSSRA. Ser-2 carries the post-translational modification N-acetylserine. Residue Ser-2 is modified to Phosphoserine. At Gln-104 the chain carries N5-methylglutamine. Lys-119 participates in a covalent cross-link: Glycyl lysine isopeptide (Lys-Gly) (interchain with G-Cter in ubiquitin).

Belongs to the histone H2A family. In terms of assembly, the nucleosome is a histone octamer containing two molecules each of H2A, H2B, H3 and H4 assembled in one H3-H4 heterotetramer and two H2A-H2B heterodimers. The octamer wraps approximately 147 bp of DNA. Monoubiquitination of Lys-119 gives a specific tag for epigenetic transcriptional repression. In terms of processing, phosphorylation of Ser-2 directly represses transcription.

The protein resides in the nucleus. It localises to the chromosome. Core component of nucleosome. Nucleosomes wrap and compact DNA into chromatin, limiting DNA accessibility to the cellular machineries which require DNA as a template. Histones thereby play a central role in transcription regulation, DNA repair, DNA replication and chromosomal stability. DNA accessibility is regulated via a complex set of post-translational modifications of histones, also called histone code, and nucleosome remodeling. This chain is Late histone H2A.1, found in Psammechinus miliaris (Green sea urchin).